The following is a 459-amino-acid chain: MNRLPSSASALACSAHALNLIEKRTLDHEEMKALNREVIEYFKEHVNPGFLEYRKSVTAGGDYGAVEWQAGGLNTLVDTQGQEFIDCLGGFGIFNVGHRNPVVVSAVQNQLAKQPLHSQELLDPLRAMLAKTLAALTPGKLKYSFFCNSGTESVEAALKLAKAYQSPRGKFTFIATSGAFHGKSLGALSATAKSTFRKPFMPLLPGFRHVPFGNIEAMLTALNECKKTGDDVAAVILEPIQGEGGVILPPPGYLTAVRKLCDEFGALMILDEVQTGMGRTGKMFACEHENVQPDILCLAKALGGGVMPIGATIATEEVFSVLFDNPFLHTTTFGGNPLACAAALATINVLLEQNLPAQAEQKGDMLLDGFRQLAREYPDLVQEARGKGMLMAIEFVDNEIGYNFASEMFRQRVLVAGTLNNAKTIRIEPPLTLTIEQCELVIKAARKALAAMRVSVEEA.

Pyridoxal 5'-phosphate-binding positions include 150–151 (GT) and glutamine 274. Lysine 300 bears the N6-(pyridoxal phosphate)lysine mark. Residue threonine 332 coordinates pyridoxal 5'-phosphate.

The protein belongs to the class-III pyridoxal-phosphate-dependent aminotransferase family. Putrescine aminotransferase subfamily. It depends on pyridoxal 5'-phosphate as a cofactor.

The catalysed reaction is an alkane-alpha,omega-diamine + 2-oxoglutarate = an omega-aminoaldehyde + L-glutamate. It carries out the reaction putrescine + 2-oxoglutarate = 1-pyrroline + L-glutamate + H2O. It catalyses the reaction cadaverine + 2-oxoglutarate = 5-aminopentanal + L-glutamate. The protein operates within amine and polyamine degradation; putrescine degradation; 4-aminobutanal from putrescine (transaminase route): step 1/1. Its function is as follows. Catalyzes the aminotransferase reaction from putrescine to 2-oxoglutarate, leading to glutamate and 4-aminobutanal, which spontaneously cyclizes to form 1-pyrroline. This is the first step in one of two pathways for putrescine degradation, where putrescine is converted into 4-aminobutanoate (gamma-aminobutyrate or GABA) via 4-aminobutanal. Also functions as a cadaverine transaminase in a a L-lysine degradation pathway to succinate that proceeds via cadaverine, glutarate and L-2-hydroxyglutarate. The protein is Putrescine aminotransferase of Escherichia coli O6:H1 (strain CFT073 / ATCC 700928 / UPEC).